We begin with the raw amino-acid sequence, 212 residues long: Pyridoxine/pyridoxamine 5'-phosphate oxidase (212 aa).

Residues 1 to 20 form a disordered region; it reads MSDSAMEPQNPLTSGDFTAA. FMN-binding positions include 59–64, 74–75, Lys-81, and Gln-103; these read RMVLLK and YT. Residue Lys-64 coordinates substrate. Positions 121, 125, and 129 each coordinate substrate. FMN-binding positions include 138–139 and Trp-183; that span reads QS. 189 to 191 provides a ligand contact to substrate; it reads RLH. An FMN-binding site is contributed by Arg-193.

The protein belongs to the pyridoxamine 5'-phosphate oxidase family. In terms of assembly, homodimer. It depends on FMN as a cofactor.

The enzyme catalyses pyridoxamine 5'-phosphate + O2 + H2O = pyridoxal 5'-phosphate + H2O2 + NH4(+). It catalyses the reaction pyridoxine 5'-phosphate + O2 = pyridoxal 5'-phosphate + H2O2. It participates in cofactor metabolism; pyridoxal 5'-phosphate salvage; pyridoxal 5'-phosphate from pyridoxamine 5'-phosphate: step 1/1. The protein operates within cofactor metabolism; pyridoxal 5'-phosphate salvage; pyridoxal 5'-phosphate from pyridoxine 5'-phosphate: step 1/1. Catalyzes the oxidation of either pyridoxine 5'-phosphate (PNP) or pyridoxamine 5'-phosphate (PMP) into pyridoxal 5'-phosphate (PLP). This chain is Pyridoxine/pyridoxamine 5'-phosphate oxidase, found in Azorhizobium caulinodans (strain ATCC 43989 / DSM 5975 / JCM 20966 / LMG 6465 / NBRC 14845 / NCIMB 13405 / ORS 571).